A 1077-amino-acid polypeptide reads, in one-letter code: Zinc finger protein 518B (1077 aa).

The span at 9–30 (YTTQVNGGPSSLTMSPKQPNRA) shows a compositional bias: polar residues. The disordered stretch occupies residues 9–35 (YTTQVNGGPSSLTMSPKQPNRATRTER). 2 C2H2-type zinc fingers span residues 160-182 (FICS…LVKH) and 188-211 (YRCE…RRVH). Residues 372 to 397 (TSRGDGGTSECLSTEKGSGGQKKMLS) form a disordered region. Lys479 participates in a covalent cross-link: Glycyl lysine isopeptide (Lys-Gly) (interchain with G-Cter in SUMO2). 4 disordered regions span residues 561 to 585 (LVSS…GQVS), 599 to 622 (GEDK…ETAG), 675 to 739 (KPSS…GSRQ), and 825 to 852 (QPLT…RKED). Residues 564 to 574 (SDRKLEDKQME) show a composition bias toward basic and acidic residues. Composition is skewed to polar residues over residues 605 to 621 (SQQP…SETA) and 675 to 688 (KPSS…QRRS). Residues Lys847 and Lys861 each participate in a glycyl lysine isopeptide (Lys-Gly) (interchain with G-Cter in SUMO2) cross-link. The interval 895–914 (QVNSTKKKNKMQANPGRYFK) is disordered. Residues 1039-1061 (FKCWFCGRLYEDQEEWMSHGQRH) form a C2H2-type 3 zinc finger.

The protein belongs to the krueppel C2H2-type zinc-finger protein family.

Its subcellular location is the nucleus. In terms of biological role, through its association with the EHMT1-EHMT2/G9A and PRC2/EED-EZH2 histone methyltransferase complexes may function in gene silencing, regulating repressive post-translational methylation of histone tails at promoters of target genes. This Mus musculus (Mouse) protein is Zinc finger protein 518B (Znf518b).